Consider the following 906-residue polypeptide: Protein translocase subunit SecA (906 aa).

ATP is bound by residues Gln-86, 104–108 (GEGKT), and Asp-499. A disordered region spans residues 862–887 (KPVVSRIDPKDRNPDDPTSWGRVSRN). Cys-890, Cys-892, Cys-901, and His-902 together coordinate Zn(2+).

It belongs to the SecA family. In terms of assembly, monomer and homodimer. Part of the essential Sec protein translocation apparatus which comprises SecA, SecYEG and auxiliary proteins SecDF-YajC and YidC. It depends on Zn(2+) as a cofactor.

It localises to the cell inner membrane. It is found in the cytoplasm. It catalyses the reaction ATP + H2O + cellular proteinSide 1 = ADP + phosphate + cellular proteinSide 2.. Functionally, part of the Sec protein translocase complex. Interacts with the SecYEG preprotein conducting channel. Has a central role in coupling the hydrolysis of ATP to the transfer of proteins into and across the cell membrane, serving both as a receptor for the preprotein-SecB complex and as an ATP-driven molecular motor driving the stepwise translocation of polypeptide chains across the membrane. This is Protein translocase subunit SecA from Rickettsia peacockii (strain Rustic).